The chain runs to 309 residues: Ribonuclease Z (309 aa).

Residues H64, H66, D68, H69, H141, D209, and H267 each contribute to the Zn(2+) site. Catalysis depends on D68, which acts as the Proton acceptor.

Belongs to the RNase Z family. As to quaternary structure, homodimer. It depends on Zn(2+) as a cofactor.

The catalysed reaction is Endonucleolytic cleavage of RNA, removing extra 3' nucleotides from tRNA precursor, generating 3' termini of tRNAs. A 3'-hydroxy group is left at the tRNA terminus and a 5'-phosphoryl group is left at the trailer molecule.. Functionally, zinc phosphodiesterase, which displays some tRNA 3'-processing endonuclease activity. Probably involved in tRNA maturation, by removing a 3'-trailer from precursor tRNA. This chain is Ribonuclease Z, found in Picrophilus torridus (strain ATCC 700027 / DSM 9790 / JCM 10055 / NBRC 100828 / KAW 2/3).